We begin with the raw amino-acid sequence, 73 residues long: MSTVETPAQDTLATKEPNKTGAKDRQQARSARLSVAAGAGRTALSQRDAQEDRFSLGIVQTADKIENTFNFNF.

Residues 1-12 are compositionally biased toward polar residues; sequence MSTVETPAQDTL. Residues 1–48 form a disordered region; it reads MSTVETPAQDTLATKEPNKTGAKDRQQARSARLSVAAGAGRTALSQRD. The segment covering 16–27 has biased composition (basic and acidic residues); sequence EPNKTGAKDRQQ.

It belongs to the carmovirus/necrovirus/panicovirus movement protein p8 family.

Its subcellular location is the host cell wall. Its function is as follows. Cell-to-cell movement. This Muhlenbergia (Blackwell switchgrass) protein is Probable movement protein p8.